A 207-amino-acid chain; its full sequence is Superoxide dismutase [Mn] (207 aa).

Mn(2+) is bound by residues His-30, His-78, Asp-166, and His-170.

The protein belongs to the iron/manganese superoxide dismutase family. As to quaternary structure, homodimer. Mn(2+) serves as cofactor.

The catalysed reaction is 2 superoxide + 2 H(+) = H2O2 + O2. Functionally, destroys superoxide anion radicals which are normally produced within the cells and which are toxic to biological systems. The sequence is that of Superoxide dismutase [Mn] (sodA) from Chlamydia pneumoniae (Chlamydophila pneumoniae).